The chain runs to 659 residues: MFKLFTARQHDKIWDFDGGIHPPEMKLQSSTVPMRIAPLPDQLIIPLQQHLGPEGELRVRAGEQVLKGQPLTVGRGRTVPVHAPTSGMITAIAPHTTAHPSGLAELCVHITPDGEDRWREQQPWADYRQRDKMALLDRIHQAGIAGLGGAGFPTASKLQGGLNGIITLIINAAECEPYITADDRLMQEHADEVITGIHILRHLLQPQQVLIGIEDNKPEAIAALQRALRGQDDIHLRVVPTKYPSGGAKQLTKILTGKEVPFGKHSSSIGVLMQNVGTVVAIKRAVIDDEPLIERVVTLTGDALSSPGNFWARIGTPVLYLLKLAGFKPQNPPMVIMGGPLMGFTLPSLDVPIVKISNCILAPAETEMGLSEPEQSCIRCGLCVDACPAGLLPQQLYWFSRGEEHEKARNHNLFDCIECGACAYVCPSNIPLVQYYRQEKAEIRALDQESARAAEAKARFEAKQARLAREKLARELRHKQAAVKLTDADQQTVDAAVSRLTRQSDGSESVINIPAGQMPDNSAVIAAREARKAQARARQAEKQQARSTEETTDVVDPRQAAVAAAIARVKAKKAVQAQHVTTDVAEAGSEAMAEDPRKAAVAAAIARVKAKKAAQAQHVTTDVAEAGSEAMAEDPRKAAVAAAIARVKAKKAAQAINPD.

2 consecutive 4Fe-4S ferredoxin-type domains span residues 366 to 397 (TEMG…QQLY) and 407 to 436 (KARN…VQYY). Cys377, Cys380, Cys383, Cys387, Cys416, Cys419, Cys422, and Cys426 together coordinate [4Fe-4S] cluster.

This sequence belongs to the 4Fe4S bacterial-type ferredoxin family. RnfC subfamily. As to quaternary structure, the complex is composed of six subunits: RnfA, RnfB, RnfC, RnfD, RnfE and RnfG. [4Fe-4S] cluster is required as a cofactor.

It is found in the cell inner membrane. Part of a membrane-bound complex that couples electron transfer with translocation of ions across the membrane. The polypeptide is Ion-translocating oxidoreductase complex subunit C (Yersinia pestis bv. Antiqua (strain Nepal516)).